The sequence spans 287 residues: Octanoyl-[GcvH]:protein N-octanoyltransferase (287 aa).

The BPL/LPL catalytic domain occupies 45–253; sequence GESPATARSW…ELKELSGRLY (209 aa). The Acyl-thioester intermediate role is filled by Cys150.

This sequence belongs to the octanoyltransferase LipL family.

It carries out the reaction N(6)-octanoyl-L-lysyl-[glycine-cleavage complex H protein] + L-lysyl-[lipoyl-carrier protein] = N(6)-octanoyl-L-lysyl-[lipoyl-carrier protein] + L-lysyl-[glycine-cleavage complex H protein]. The protein operates within protein modification; protein lipoylation via endogenous pathway; protein N(6)-(lipoyl)lysine from octanoyl-[acyl-carrier-protein]. Its function is as follows. Catalyzes the amidotransfer (transamidation) of the octanoyl moiety from octanoyl-GcvH to the lipoyl domain of the E2 subunit of lipoate-dependent enzymes. The polypeptide is Octanoyl-[GcvH]:protein N-octanoyltransferase (Bacillus velezensis (strain DSM 23117 / BGSC 10A6 / LMG 26770 / FZB42) (Bacillus amyloliquefaciens subsp. plantarum)).